We begin with the raw amino-acid sequence, 459 residues long: MSDVPANQLFDAYFMAAPMRAVFSDRGRLQGMLDFEAALARAEARTGVVPATAVAPIEAACRAELYDPLALAEAVATAGNSAIPLVKALGRQVAAGDAEAERYVHLGATSQDAMDSGLVLQLRRALALLEQDLQRLAEVLADQAERHADTPLAGRTWLQHATPVTLGMKLAGLLGALTRHRQRLRELRPRLLVLQFGGASGTLAALGEQALPVAAALAEELGLALPEQPWHTQRDRLVEFASVLGLVAGSLGKFGRDVSLLMQTEAGEVFEPAGAGRGGSSTMPHKRNPVSSAVLIAAATRAPGLVSTLFAAMPQEHERSLGLWHAEWETLPELCCLVAGALQQAIGLLEGLEVDAQRMRRNLGLTHGLVLAEAVSIALARRIGREAAHHLVEQCCRRAVEQRRELRAVLGEEARVSAELSGDELDRLLDPAHYLGQARAWVERALAEHHALGFEPHPA.

This sequence belongs to the class-II fumarase/aspartase family. As to quaternary structure, homotetramer.

Its subcellular location is the cytoplasm. It carries out the reaction 2-(carboxymethyl)-5-oxo-2,5-dihydro-2-furoate = 3-carboxy-cis,cis-muconate + H(+). It functions in the pathway aromatic compound metabolism; beta-ketoadipate pathway; 5-oxo-4,5-dihydro-2-furylacetate from 3-carboxy-cis,cis-muconate: step 1/2. Its function is as follows. Catalyzes an anti cycloisomerization. The protein is 3-carboxy-cis,cis-muconate cycloisomerase (pcaB) of Pseudomonas aeruginosa (strain ATCC 15692 / DSM 22644 / CIP 104116 / JCM 14847 / LMG 12228 / 1C / PRS 101 / PAO1).